The following is a 59-amino-acid chain: Potassium channel toxin alpha-KTx 1.1 (59 aa).

The signal sequence occupies residues 1-22 (MKILSVLLLALIICSIVGWSEA). Gln23 carries the post-translational modification Pyrrolidone carboxylic acid. 3 disulfides stabilise this stretch: Cys29–Cys50, Cys35–Cys55, and Cys39–Cys57. Residues 48–55 (GKCMNKKC) are interaction with Ca(2+)-activated K(+) channels.

The protein belongs to the short scorpion toxin superfamily. Potassium channel inhibitor family. Alpha-KTx 01 subfamily. In terms of tissue distribution, expressed by the venom gland.

The protein resides in the secreted. This toxin inhibits numerous potassium channels: shaker (Ki=227 nM), Kv1.2/KCNA2 (nanomolar range), Kv1.3/KCNA3 (nanomolar range), Kv1.5/KCNA5 (Kd&gt;100 nM), Kv1.6/KCNA6 (Ki=22 nM), KCa1.1/KCNMA1 (IC(50)=5.9 nM). It blocks channel activity by a simple bimolecular inhibition process. It also shows a weak interaction with nicotinic acetylcholine receptors (nAChR), suggesting it may weakly inhibit it. It also exhibits pH-specific antimicrobial activities against bacteria (B.subtilis, E.coli and S.aureus) and the fungus C.albicans. This is Potassium channel toxin alpha-KTx 1.1 from Leiurus hebraeus (Hebrew deathstalker scorpion).